A 1321-amino-acid chain; its full sequence is Bile salt export pump (1321 aa).

Over 1–62 (MSDSVILRSV…FSSSKDIWLM (62 aa)) the chain is Cytoplasmic. An ABC transmembrane type-1 1 domain is found at 62 to 385 (MLMGGVCALL…ASSCLEIFST (324 aa)). The chain crosses the membrane as a helical span at residues 63-83 (LMGGVCALLHGMAQPGILIIF). Residues 84-147 (GIMTDIFIKY…MIKFSGIYAG (64 aa)) are Extracellular-facing. N-linked (GlcNAc...) asparagine glycans are attached at residues Asn-109, Asn-116, Asn-122, and Asn-125. Residues 148-168 (VGMTVLILGYFQIRLWVITGA) traverse the membrane as a helical segment. Residues 169 to 215 (RQIRRMRKIYFRRIMRMEIGWFDCTSVGELNSRFADDIEKINDAIAD) are Cytoplasmic-facing. Residues 216 to 236 (QLAHFLQRMSTAMCGLLLGFY) form a helical membrane-spanning segment. Residues 237-240 (RGWK) lie on the Extracellular side of the membrane. Residues 241 to 261 (LTLVILAVSPLIGIGAAVIGL) traverse the membrane as a helical segment. The Cytoplasmic portion of the chain corresponds to 262-319 (SIAKFTELELKAYAKAGSIADEVLSSIRTVAAFGGENKEVERYEKNLVFAQRWGIWKG). A helical membrane pass occupies residues 320–340 (MVMGFFTGYMWCLIFFCYALA). Residues 341–353 (FWYGSTLVLDEEE) lie on the Extracellular side of the membrane. Residues 354–374 (YTPGTLVQIFLCVILAAMNIG) traverse the membrane as a helical segment. Residues 375 to 755 (HASSCLEIFS…KYNIPEWHYI (381 aa)) are Cytoplasmic-facing. The ABC transporter 1 domain maps to 420–656 (IEFHNVTFHY…KGVYFMLVTL (237 aa)). An ATP-binding site is contributed by 455–462 (GSSGAGKS). Phosphothreonine is present on Thr-586. Ser-587 carries the phosphoserine modification. The tract at residues 651–674 (FMLVTLQSQGDNAHKETSIMGKDA) is interaction with HAX1. Phosphoserine is present on residues Ser-692, Ser-703, and Ser-706. The 289-residue stretch at 755 to 1043 (ILVGSLSAAI…TFSYTPSYAK (289 aa)) folds into the ABC transmembrane type-1 2 domain. The helical transmembrane segment at 756–776 (LVGSLSAAINGAVTPIYSLLF) threads the bilayer. Residues 777 to 794 (SQLLGTFSLLDKEQQRSE) lie on the Extracellular side of the membrane. A helical transmembrane segment spans residues 795–815 (IHSMCLFFVILGCVSIFTQFL). The Cytoplasmic portion of the chain corresponds to 816–869 (QGYTFAKSGELLTKRLRKFGFKAMLGQDIGWFDDLRNNPGVLTTRLATDASQVQ). The next 2 membrane-spanning stretches (helical) occupy residues 870-890 (GATG…IAAL) and 891-911 (LIAF…FPFL). The Cytoplasmic segment spans residues 912-979 (ALSGAVQTKM…SYKTAVRKAN (68 aa)). The helical transmembrane segment at 980-1000 (IYGLCFAFSQGIAFLANSAAY) threads the bilayer. Over 1001–1011 (RYGGYLIAYEG) the chain is Extracellular. A helical membrane pass occupies residues 1012 to 1032 (LGFSHVFRVVSSVALSATAVG). Residues 1033–1321 (RTFSYTPSYA…KLVITGAPIS (289 aa)) are Cytoplasmic-facing. In terms of domain architecture, ABC transporter 2 spans 1078-1316 (IDFIDCKFTY…KGAYYKLVIT (239 aa)). Position 1113–1120 (1113–1120 (GSSGCGKS)) interacts with ATP. Ser-1321 carries the phosphoserine modification.

It belongs to the ABC transporter superfamily. ABCB family. Multidrug resistance exporter (TC 3.A.1.201) subfamily. Interacts with HAX1. Interacts with the adapter protein complex 2 (AP-2) throught AP2A2 or AP2A1; this interaction regulates cell membrane expression of ABCB11 through its internalization in a clathrin-dependent manner and its subsequent degradation. Ubiquitinated; short-chain ubiquitination regulates cell-Surface expression of ABCB11. Post-translationally, N-glycosylated. Expressed predominantly, if not exclusively in the liver, where it was further localized to the canalicular microvilli and to subcanalicular vesicles of the hepatocytes by in situ.

The protein localises to the apical cell membrane. It localises to the recycling endosome membrane. It is found in the endosome. Its subcellular location is the cell membrane. The enzyme catalyses cholate(in) + ATP + H2O = cholate(out) + ADP + phosphate + H(+). The catalysed reaction is taurocholate(in) + ATP + H2O = taurocholate(out) + ADP + phosphate + H(+). It catalyses the reaction glycocholate(in) + ATP + H2O = glycocholate(out) + ADP + phosphate + H(+). It carries out the reaction glycochenodeoxycholate(in) + ATP + H2O = glycochenodeoxycholate(out) + ADP + phosphate + H(+). The enzyme catalyses taurochenodeoxycholate(in) + ATP + H2O = taurochenodeoxycholate(out) + ADP + phosphate + H(+). The catalysed reaction is glycoursodeoxycholate(in) + ATP + H2O = glycoursodeoxycholate(out) + ADP + phosphate + H(+). It catalyses the reaction tauroursodeoxycholate(in) + ATP + H2O = tauroursodeoxycholate(out) + ADP + phosphate + H(+). It carries out the reaction taurodeoxycholate(in) + ATP + H2O = taurodeoxycholate(out) + ADP + phosphate + H(+). The enzyme catalyses pravastatin(in) + ATP + H2O = pravastatin(out) + ADP + phosphate + H(+). With respect to regulation, the uptake of taurocholate is inhibited by taurolithocholate sulfate with an IC(50) of 52.9 uM. Pravastatin competitively inhibits the transport of taurocholic acid. Cyclosporin A, glibenclamide, rifampicin and troglitazonestrongly competitively inhibit the transport activity of taurocholate. The canalicular transport activity of taurocholate is strongly dependent on canalicular membrane cholesterol content. The uptake of taurocholate is increased by short- and medium-chain fatty acids. Cholesterol increases transport capacity of taurocholate without affecting the affinity for the substrate. Functionally, catalyzes the transport of the major hydrophobic bile salts, such as taurine and glycine-conjugated cholic acid across the canalicular membrane of hepatocytes in an ATP-dependent manner, therefore participates in hepatic bile acid homeostasis and consequently to lipid homeostasis through regulation of biliary lipid secretion in a bile salts dependent manner. Transports taurine-conjugated bile salts more rapidly than glycine-conjugated bile salts. Also transports non-bile acid compounds, such as pravastatin and fexofenadine in an ATP-dependent manner and may be involved in their biliary excretion. This Rattus norvegicus (Rat) protein is Bile salt export pump.